The sequence spans 707 residues: Polyribonucleotide nucleotidyltransferase (707 aa).

Mg(2+)-binding residues include D484 and D490. The region spanning 551 to 610 (PRVVRMVVNPEKIRDIIGPAGKTITKIISETGVKIDIEEDGRLYITAPNLEAGERAKQMI) is the KH domain. The 69-residue stretch at 620–688 (GGIYLGKVLR…KLGRIVLSRK (69 aa)) folds into the S1 motif domain. The tract at residues 688-707 (KDAMPDEEESDNRKSDNRKK) is disordered. Over residues 698–707 (DNRKSDNRKK) the composition is skewed to basic and acidic residues.

The protein belongs to the polyribonucleotide nucleotidyltransferase family. The cofactor is Mg(2+).

It localises to the cytoplasm. It catalyses the reaction RNA(n+1) + phosphate = RNA(n) + a ribonucleoside 5'-diphosphate. Involved in mRNA degradation. Catalyzes the phosphorolysis of single-stranded polyribonucleotides processively in the 3'- to 5'-direction. In Caldanaerobacter subterraneus subsp. tengcongensis (strain DSM 15242 / JCM 11007 / NBRC 100824 / MB4) (Thermoanaerobacter tengcongensis), this protein is Polyribonucleotide nucleotidyltransferase.